The following is a 459-amino-acid chain: Protein maelstrom (459 aa).

A DNA-binding region (HMG box) is located at residues 2-69 (APKKHSGFMM…AQRAKRESSN (68 aa)). The interval 43–78 (NTQQRGPYNSGGKDANVAQRAKRESSNGHGQVDKAQ) is disordered. Residues 63 to 78 (AKRESSNGHGQVDKAQ) are compositionally biased toward basic and acidic residues.

It belongs to the maelstrom family. As to expression, in germaria and egg chambers, it is detected in the germline. In the germarium, it is in all regions, including region I where the germ cells are dividing. In early egg chambers, it is uniformly distributed throughout the nurse cells and oocyte but, by stage 5, it is most concentrated around the outer margins of the cells, closest to the periphery of the egg chamber. Level decreases in stages 5 and 6, but most noticeably in the oocyte, where protein level remains. No detectable protein from stage 8 onward (at protein level).

It is found in the cytoplasm. Its subcellular location is the nucleus. The protein localises to the perinuclear region. The protein resides in the cytoplasmic ribonucleoprotein granule. Its function is as follows. Involved both in the piRNA and miRNA metabolic processes. As a component of the meiotic nuage, plays a central role during oogenesis by repressing transposable elements and preventing their mobilization, which is essential for the germline integrity. Repression of transposable elements is mediated via the piRNA metabolic process, which mediates the repression of transposable elements during meiosis by forming complexes composed of piRNAs and Piwi proteins and governs the repression of transposons. As a nuclear component, it is required for proper differentiation in the germline stem cell (GSC) lineage by repressing microRNA-7 (miR-7), thereby acting as an indirect regulator of bag-of-marbles (Bam). Acts by binding to the promoter of miR-7 gene and repressing its expression; miR-7 repression alleviates the Bam repression by miR-7, thereby allowing differentiation in the germline stem cell (GSC) lineage. Indirectly required to position the microtubule organizing center in stage 2-6 oocytes. Involved in repression of long interspersed nuclear elements (LINEs) including HeT-A, I-element, TART and possibly mst40 LINEs; may have a role in production of piwi-interacting RNA (piRNA). This chain is Protein maelstrom, found in Drosophila melanogaster (Fruit fly).